A 345-amino-acid chain; its full sequence is Transcription initiation factor IIB (345 aa).

The TFIIB-type zinc finger occupies Val-8–Ala-40. Zn(2+)-binding residues include Cys-12, Cys-15, Cys-32, and Cys-35. Disordered regions lie at residues Asp-59 to Ser-89 and Pro-318 to Thr-345. Over residues Thr-71–Ala-83 the composition is skewed to low complexity.

Belongs to the TFIIB family. In terms of assembly, monomer. Interacts with RNA polymerase II subunits RPB1 and RPB2. Interacts with TBP; the interaction is direct.

The protein resides in the nucleus. Its function is as follows. Specifically binds to the promoter of the spliced leader (SL) RNA gene and thus is essential for SLRNA transcription. This Trypanosoma brucei brucei protein is Transcription initiation factor IIB.